Here is a 473-residue protein sequence, read N- to C-terminus: Ornithine decarboxylase (473 aa).

Residue lysine 106 is modified to N6-(pyridoxal phosphate)lysine. Residues serine 240, glycine 277, and 313-316 (EPGR) each bind pyridoxal 5'-phosphate. 367–368 (FD) is a binding site for substrate. Residue cysteine 417 is the Proton donor; shared with dimeric partner of the active site. Aspartate 418 is a substrate binding site. Pyridoxal 5'-phosphate is bound at residue tyrosine 447.

The protein belongs to the Orn/Lys/Arg decarboxylase class-II family. In terms of assembly, homodimer. Only the dimer is catalytically active, as the active sites are constructed of residues from both monomers. It depends on pyridoxal 5'-phosphate as a cofactor.

The protein localises to the cytoplasm. The enzyme catalyses L-ornithine + H(+) = putrescine + CO2. Its pathway is amine and polyamine biosynthesis; putrescine biosynthesis via L-ornithine pathway; putrescine from L-ornithine: step 1/1. Inhibited by antizyme (AZ) OAZ1 in response to polyamine levels. AZ inhibits the assembly of the functional homodimer by binding to ODC monomers and targeting them for ubiquitin-independent proteolytic destruction by the 26S proteasome. Its function is as follows. Catalyzes the first and rate-limiting step of polyamine biosynthesis that converts ornithine into putrescine, which is the precursor for the polyamines, spermidine and spermine. Polyamines are essential for cell proliferation and are implicated in cellular processes, ranging from DNA replication to apoptosis. The protein is Ornithine decarboxylase (SPE1) of Candida albicans (strain SC5314 / ATCC MYA-2876) (Yeast).